The chain runs to 227 residues: Cytochrome c oxidase subunit 2 (227 aa).

Residues 1-14 (MAYPFQLGLQDATS) lie on the Mitochondrial intermembrane side of the membrane. Residues 15–45 (PIMEELTNFHDHTLMIVFLISSLVLYIISLM) form a helical membrane-spanning segment. Residues 46–59 (LTTKLTHTSTMDAQ) are Mitochondrial matrix-facing. The helical transmembrane segment at 60–87 (EVETIWTILPAVILILIALPSLRILYMM) threads the bilayer. Residues 88-227 (DEINNPVLTV…HFENWSASMI (140 aa)) lie on the Mitochondrial intermembrane side of the membrane. The Cu cation site is built by histidine 161, cysteine 196, glutamate 198, cysteine 200, histidine 204, and methionine 207. Glutamate 198 lines the Mg(2+) pocket.

The protein belongs to the cytochrome c oxidase subunit 2 family. In terms of assembly, component of the cytochrome c oxidase (complex IV, CIV), a multisubunit enzyme composed of 14 subunits. The complex is composed of a catalytic core of 3 subunits MT-CO1, MT-CO2 and MT-CO3, encoded in the mitochondrial DNA, and 11 supernumerary subunits COX4I, COX5A, COX5B, COX6A, COX6B, COX6C, COX7A, COX7B, COX7C, COX8 and NDUFA4, which are encoded in the nuclear genome. The complex exists as a monomer or a dimer and forms supercomplexes (SCs) in the inner mitochondrial membrane with NADH-ubiquinone oxidoreductase (complex I, CI) and ubiquinol-cytochrome c oxidoreductase (cytochrome b-c1 complex, complex III, CIII), resulting in different assemblies (supercomplex SCI(1)III(2)IV(1) and megacomplex MCI(2)III(2)IV(2)). Found in a complex with TMEM177, COA6, COX18, COX20, SCO1 and SCO2. Interacts with TMEM177 in a COX20-dependent manner. Interacts with COX20. Interacts with COX16. The cofactor is Cu cation.

The protein localises to the mitochondrion inner membrane. It catalyses the reaction 4 Fe(II)-[cytochrome c] + O2 + 8 H(+)(in) = 4 Fe(III)-[cytochrome c] + 2 H2O + 4 H(+)(out). Its function is as follows. Component of the cytochrome c oxidase, the last enzyme in the mitochondrial electron transport chain which drives oxidative phosphorylation. The respiratory chain contains 3 multisubunit complexes succinate dehydrogenase (complex II, CII), ubiquinol-cytochrome c oxidoreductase (cytochrome b-c1 complex, complex III, CIII) and cytochrome c oxidase (complex IV, CIV), that cooperate to transfer electrons derived from NADH and succinate to molecular oxygen, creating an electrochemical gradient over the inner membrane that drives transmembrane transport and the ATP synthase. Cytochrome c oxidase is the component of the respiratory chain that catalyzes the reduction of oxygen to water. Electrons originating from reduced cytochrome c in the intermembrane space (IMS) are transferred via the dinuclear copper A center (CU(A)) of subunit 2 and heme A of subunit 1 to the active site in subunit 1, a binuclear center (BNC) formed by heme A3 and copper B (CU(B)). The BNC reduces molecular oxygen to 2 water molecules using 4 electrons from cytochrome c in the IMS and 4 protons from the mitochondrial matrix. The protein is Cytochrome c oxidase subunit 2 (MT-CO2) of Batomys granti (Luzon hairy-tailed rat).